The sequence spans 177 residues: Glutathione peroxidase homolog (177 aa).

The active site involves C35.

The protein belongs to the glutathione peroxidase family.

In terms of biological role, important in the cellular metabolism or defense processes particular to this pathogen. The protein is Glutathione peroxidase homolog (gpxA) of Neisseria meningitidis serogroup A / serotype 4A (strain DSM 15465 / Z2491).